A 628-amino-acid chain; its full sequence is Chaperone protein DnaK (628 aa).

Threonine 197 bears the Phosphothreonine; by autocatalysis mark. The span at 595-604 (AEAMYKKEQG) shows a compositional bias: basic and acidic residues. Residues 595–628 (AEAMYKKEQGEQAGAQPNQKAKKDDDDVIDAEVE) form a disordered region.

The protein belongs to the heat shock protein 70 family.

Functionally, acts as a chaperone. This chain is Chaperone protein DnaK, found in Aliarcobacter butzleri (strain RM4018) (Arcobacter butzleri).